We begin with the raw amino-acid sequence, 639 residues long: 3-hydroxybenzoate 4-monooxygenase (639 aa).

Residues 34–64, Gln-73, Val-166, Asn-212, 269–271, Tyr-317, Asp-349, and Ser-365 contribute to the FAD site; these read DVLIVGCGPAGLTLAAQLAAFPDIRTCIVEQ and RFY.

This sequence belongs to the PheA/TfdB FAD monooxygenase family. Homodimer. The cofactor is FAD.

The catalysed reaction is 3-hydroxybenzoate + NADPH + O2 + H(+) = 3,4-dihydroxybenzoate + NADP(+) + H2O. Functionally, converts 3-hydroxybenzoate (m-hydroxybenzoate), and to a lesser extent p-hydroxybenzoate, to 3,4-dihydroxybenzoate (protocatechuate). Also acts on a number of analogs of 3-hydroxybenzoate substituted in the 2, 4, 5 and 6 positions. The protein is 3-hydroxybenzoate 4-monooxygenase (mobA) of Comamonas testosteroni (Pseudomonas testosteroni).